A 277-amino-acid chain; its full sequence is DNA-binding transcriptional activator MhpR (277 aa).

In terms of domain architecture, HTH iclR-type spans valine 12–isoleucine 74. Positions valine 34–glutamate 53 form a DNA-binding region, H-T-H motif. The 174-residue stretch at isoleucine 89–serine 262 folds into the IclR-ED domain.

In terms of biological role, activator of the mhpABCDFE operon coding for components of the 3-hydroxyphenylpropionate degradation pathway. The chain is DNA-binding transcriptional activator MhpR (mhpR) from Escherichia coli (strain K12).